Consider the following 39-residue polypeptide: Photosystem II reaction center protein Y (39 aa).

Residues 7–25 traverse the membrane as a helical segment; sequence VLVVLLPVLLAGGWALKNI.

The protein belongs to the PsbY family. PSII is composed of 1 copy each of membrane proteins PsbA, PsbB, PsbC, PsbD, PsbE, PsbF, PsbH, PsbI, PsbJ, PsbK, PsbL, PsbM, PsbT, PsbX, PsbY, PsbZ, Psb30/Ycf12, peripheral proteins PsbO, CyanoQ (PsbQ), PsbU, PsbV and a large number of cofactors. It forms dimeric complexes.

It localises to the cellular thylakoid membrane. Its function is as follows. Loosely associated component of the core of photosystem II (PSII), it is not always seen in crystals. PSII is a light-driven water plastoquinone oxidoreductase, using light energy to abstract electrons from H(2)O, generating a proton gradient subsequently used for ATP formation. This Cyanothece sp. (strain PCC 7425 / ATCC 29141) protein is Photosystem II reaction center protein Y.